Consider the following 355-residue polypeptide: Methylthioribose-1-phosphate isomerase (355 aa).

Substrate contacts are provided by residues 47 to 49 (RGA), R90, and Q197. D238 (proton donor) is an active-site residue. A substrate-binding site is contributed by 248 to 249 (NK).

This sequence belongs to the eIF-2B alpha/beta/delta subunits family. MtnA subfamily.

The enzyme catalyses 5-(methylsulfanyl)-alpha-D-ribose 1-phosphate = 5-(methylsulfanyl)-D-ribulose 1-phosphate. It participates in amino-acid biosynthesis; L-methionine biosynthesis via salvage pathway; L-methionine from S-methyl-5-thio-alpha-D-ribose 1-phosphate: step 1/6. Catalyzes the interconversion of methylthioribose-1-phosphate (MTR-1-P) into methylthioribulose-1-phosphate (MTRu-1-P). This Herpetosiphon aurantiacus (strain ATCC 23779 / DSM 785 / 114-95) protein is Methylthioribose-1-phosphate isomerase.